Here is a 156-residue protein sequence, read N- to C-terminus: Ribosome maturation factor RimP (156 aa).

Belongs to the RimP family.

The protein resides in the cytoplasm. Functionally, required for maturation of 30S ribosomal subunits. The protein is Ribosome maturation factor RimP of Bacillus cytotoxicus (strain DSM 22905 / CIP 110041 / 391-98 / NVH 391-98).